Consider the following 970-residue polypeptide: Villin-3 (970 aa).

Gelsolin-like repeat units lie at residues 31 to 111 (AVPV…ERFL), 151 to 219 (TVHV…EDGK), 273 to 339 (VLTR…TVIF), 416 to 484 (KFYS…PAEF), 536 to 576 (AIQV…QELA), and 643 to 714 (NFTQ…PQFF). The disordered stretch occupies residues 741–908 (DGVKPKLDKP…EGQPENEEGL (168 aa)). A compositionally biased stretch (polar residues) spans 755–778 (TTSSSHTGRSSVPEKSQRSRSMSF). Over residues 833 to 842 (AASIAAISAS) the composition is skewed to low complexity. Residues 878–893 (KDSTPSKDSPTVTPTI) show a composition bias toward polar residues. Residues 905–970 (EEGLPVYPYE…NRLKIALQLF (66 aa)) form the HP domain.

The protein belongs to the villin/gelsolin family. In terms of tissue distribution, expressed in roots, young leaves, and inflorescences, mostly in the vasculature of roots, leaves, and filaments of the anthers and in epidermal cells of the elongation zone and root hairs. Also detected in guard cells.

Its subcellular location is the cytoplasm. The protein localises to the cytoskeleton. Its function is as follows. Ca(2+)-regulated actin-binding protein. Binds actin microfilaments (MFs). Involved in actin filament bundling, severing and capping. Caps the barbed end of actin filaments and is able to sever them in a calcium-dependent manner. MF severing is promoted by VLN1. The protein is Villin-3 of Oryza sativa subsp. japonica (Rice).